A 314-amino-acid chain; its full sequence is Aspartate carbamoyltransferase catalytic subunit (314 aa).

Carbamoyl phosphate contacts are provided by Arg55 and Thr56. Lys83 contributes to the L-aspartate binding site. Arg105, His139, and Gln142 together coordinate carbamoyl phosphate. L-aspartate contacts are provided by Arg172 and Arg226. Gly267 and Pro268 together coordinate carbamoyl phosphate.

Belongs to the aspartate/ornithine carbamoyltransferase superfamily. ATCase family. In terms of assembly, heterododecamer (2C3:3R2) of six catalytic PyrB chains organized as two trimers (C3), and six regulatory PyrI chains organized as three dimers (R2).

It carries out the reaction carbamoyl phosphate + L-aspartate = N-carbamoyl-L-aspartate + phosphate + H(+). Its pathway is pyrimidine metabolism; UMP biosynthesis via de novo pathway; (S)-dihydroorotate from bicarbonate: step 2/3. In terms of biological role, catalyzes the condensation of carbamoyl phosphate and aspartate to form carbamoyl aspartate and inorganic phosphate, the committed step in the de novo pyrimidine nucleotide biosynthesis pathway. The protein is Aspartate carbamoyltransferase catalytic subunit of Rhodococcus jostii (strain RHA1).